The following is a 236-amino-acid chain: Phosphoribosylaminoimidazole-succinocarboxamide synthase (236 aa).

Belongs to the SAICAR synthetase family.

The catalysed reaction is 5-amino-1-(5-phospho-D-ribosyl)imidazole-4-carboxylate + L-aspartate + ATP = (2S)-2-[5-amino-1-(5-phospho-beta-D-ribosyl)imidazole-4-carboxamido]succinate + ADP + phosphate + 2 H(+). Its pathway is purine metabolism; IMP biosynthesis via de novo pathway; 5-amino-1-(5-phospho-D-ribosyl)imidazole-4-carboxamide from 5-amino-1-(5-phospho-D-ribosyl)imidazole-4-carboxylate: step 1/2. In Rickettsia bellii (strain OSU 85-389), this protein is Phosphoribosylaminoimidazole-succinocarboxamide synthase.